We begin with the raw amino-acid sequence, 60 residues long: Large ribosomal subunit protein bL32 (60 aa).

Residues 1–20 are compositionally biased toward basic residues; the sequence is MACPKKKTSKSKRSMRRAAW. A disordered region spans residues 1-22; sequence MACPKKKTSKSKRSMRRAAWKR.

This sequence belongs to the bacterial ribosomal protein bL32 family.

The chain is Large ribosomal subunit protein bL32 from Thermosynechococcus vestitus (strain NIES-2133 / IAM M-273 / BP-1).